The sequence spans 531 residues: SWI/SNF-related matrix-associated actin-dependent regulator of chromatin subfamily D member 2 (531 aa).

Residues Arg-81 and Arg-104 each carry the asymmetric dimethylarginine modification. A Phosphoserine modification is found at Ser-203. The interval 205 to 226 (SKAEGDSAGTAGTPGGTPAGDK) is disordered. Position 217 is a phosphothreonine (Thr-217). Lys-226 is covalently cross-linked (Glycyl lysine isopeptide (Lys-Gly) (interchain with G-Cter in SUMO2)). Residues 306-383 (HQPPQYKLDP…PMKLAGLLQH (78 aa)) enclose the SWIB/MDM2 domain.

The protein belongs to the SMARCD family. As to quaternary structure, component of the multiprotein chromatin-remodeling complexes SWI/SNF: SWI/SNF-A (BAF), SWI/SNF-B (PBAF) and related complexes. The canonical complex contains a catalytic subunit (either SMARCA4/BRG1/BAF190A or SMARCA2/BRM/BAF190B), and at least SMARCE1, ACTL6A/BAF53, SMARCC1/BAF155, SMARCC2/BAF170, and SMARCB1/SNF5/BAF47. Other subunits specific to each of the complexes may also be present permitting several possible combinations developmentally and tissue specific. Component of the BAF complex, which includes at least actin (ACTB), ARID1A/BAF250A, ARID1B/BAF250B, SMARCA2/BRM, SMARCA4/BRG1, ACTL6A/BAF53, ACTL6B/BAF53B, SMARCE1/BAF57, SMARCC1/BAF155, SMARCC2/BAF170, SMARCB1/SNF5/INI1, and one or more SMARCD1/BAF60A, SMARCD2/BAF60B, or SMARCD3/BAF60C. In muscle cells, the BAF complex also contains DPF3. Component of the SWI/SNF-B (PBAF) chromatin remodeling complex, at least composed of SMARCA4/BRG1, SMARCB1/BAF47/SNF5, ACTL6A/BAF53A or ACTL6B/BAF53B, SMARCE1/BAF57, SMARCD1/BAF60A, SMARCD2/BAF60B, perhaps SMARCD3/BAF60C, SMARCC1/BAF155, SMARCC2/BAF170, PBRM1/BAF180, ARID2/BAF200 and actin (ACTB). Interacts with UNKL. Interacts with CEBPE. In terms of processing, ubiquitinated through a signaling process involving RAC1 and the RING finger protein UNKL. As to expression, isoform 2 is expressed in the pancreas.

It is found in the nucleus. Its function is as follows. Involved in transcriptional activation and repression of select genes by chromatin remodeling (alteration of DNA-nucleosome topology). Component of SWI/SNF chromatin remodeling complexes that carry out key enzymatic activities, changing chromatin structure by altering DNA-histone contacts within a nucleosome in an ATP-dependent manner. Critical regulator of myeloid differentiation, controlling granulocytopoiesis and the expression of genes involved in neutrophil granule formation. This Homo sapiens (Human) protein is SWI/SNF-related matrix-associated actin-dependent regulator of chromatin subfamily D member 2 (SMARCD2).